Consider the following 210-residue polypeptide: Na(+)-translocating NADH-quinone reductase subunit D (210 aa).

The next 5 membrane-spanning stretches (helical) occupy residues 42–62, 72–92, 103–123, 131–151, and 178–198; these read FVMT…VSVI, IIVQ…ILKA, VFVG…AFAM, LIDG…VGFF, and NGLM…IWAI.

It belongs to the NqrDE/RnfAE family. As to quaternary structure, composed of six subunits; NqrA, NqrB, NqrC, NqrD, NqrE and NqrF.

It localises to the cell inner membrane. It catalyses the reaction a ubiquinone + n Na(+)(in) + NADH + H(+) = a ubiquinol + n Na(+)(out) + NAD(+). Its function is as follows. NQR complex catalyzes the reduction of ubiquinone-1 to ubiquinol by two successive reactions, coupled with the transport of Na(+) ions from the cytoplasm to the periplasm. NqrA to NqrE are probably involved in the second step, the conversion of ubisemiquinone to ubiquinol. The polypeptide is Na(+)-translocating NADH-quinone reductase subunit D (Vibrio vulnificus (strain YJ016)).